A 489-amino-acid polypeptide reads, in one-letter code: MGNVPGKIDQEDSFNDVRPDSSYNTTSSNSVIKQYDEEASSRVRTRRTTSLVNNILNGNNARTKTGSHLSSTSRRKTSREKELAKEAHAKQLVVRCSETVDGGFLAPFGCYSFEKLDYDATVVKNLIIKRKLAPFYTPLQDFDESWTRDELIKIVDGLPLHDTFDENLEEFEDVPIGNLRKSTFNELIDKSLSKKEQRRMHAKIFRARLYKKRILWQENENETFLERKLEMKRIGSKSSNVEDNTSSQPRKNYHLPSDDLKYTLYKNGSECPICFLYFPGPFNYSKCCQQPICTECFVQIKRADPHFPHDEVDPTEPQTNDSEKDPNLLTSEPANCPYCATASFSITYQPPTNRETGIGGMPADSYVYKDAAISRADGGQPNISAITSDTIRPDWEIKLNKERARLMRRSANATAIHISNRLIDPSHSRRRNTSHSITPIHDESTSASRSPEPTINELEDQMVREAIRLSLEDQDNRKKSKNRNTSLRP.

The interval 1–84 (MGNVPGKIDQ…RKTSREKELA (84 aa)) is disordered. S13 bears the Phosphoserine mark. Composition is skewed to polar residues over residues 21 to 32 (SSYNTTSSNSVI) and 51 to 69 (LVNN…GSHL). A phosphothreonine mark is found at T183 and T433. Positions 419-489 (SNRLIDPSHS…SKNRNTSLRP (71 aa)) are disordered. A Phosphoserine modification is found at S436. At T438 the chain carries Phosphothreonine. A compositionally biased stretch (basic and acidic residues) spans 461 to 477 (QMVREAIRLSLEDQDNR).

Belongs to the SIP5 family. In terms of assembly, interacts with NPA1, SNF1 and REG1.

It is found in the cytoplasm. Its function is as follows. May negatively regulate the SNF1 kinase by promoting the interaction of the REG1/GLC7 phosphatase complex with the kinase. Deletion of SIP5 promotes resistance to artemisinin, which is probably an indirect effect of an action on the electron transport chain. The sequence is that of Protein SIP5 (SIP5) from Saccharomyces cerevisiae (strain ATCC 204508 / S288c) (Baker's yeast).